The sequence spans 607 residues: Granule-bound starch synthase 1, chloroplastic/amyloplastic (607 aa).

The N-terminal 77 residues, 1–77 (MASITASHHF…RPGCSATIVC (77 aa)), are a transit peptide targeting the chloroplast. Lys95 contacts ADP-alpha-D-glucose. A disordered region spans residues 585–607 (SGSEPGVEGEEIAPLAKENVATP).

The protein belongs to the glycosyltransferase 1 family. Bacterial/plant glycogen synthase subfamily.

Its subcellular location is the plastid. It is found in the chloroplast. The protein localises to the amyloplast. The enzyme catalyses an NDP-alpha-D-glucose + [(1-&gt;4)-alpha-D-glucosyl](n) = [(1-&gt;4)-alpha-D-glucosyl](n+1) + a ribonucleoside 5'-diphosphate + H(+). Its pathway is glycan biosynthesis; starch biosynthesis. The chain is Granule-bound starch synthase 1, chloroplastic/amyloplastic (WAXY) from Solanum tuberosum (Potato).